We begin with the raw amino-acid sequence, 254 residues long: uncharacterized protein (254 aa).

5 helical membrane-spanning segments follow: residues 33–53 (MLWV…LFFI), 70–90 (FNKL…LFKS), 92–112 (FALS…LNFM), 133–153 (FIIF…ILLI), and 223–243 (FLVF…PLIF).

The protein to M.jannaschii MJ0902.

The protein resides in the cell membrane. This is an uncharacterized protein from Methanocaldococcus jannaschii (strain ATCC 43067 / DSM 2661 / JAL-1 / JCM 10045 / NBRC 100440) (Methanococcus jannaschii).